The sequence spans 517 residues: Diacylglycerol O-acyltransferase 1C (517 aa).

The disordered stretch occupies residues 1 to 82 (MAISDVPAAA…NVGAAANDAG (82 aa)). Over residues 8–17 (AAAGTTATTT) the composition is skewed to low complexity. Residues 53–64 (ITDDDNIKDHKP) show a composition bias toward basic and acidic residues. Residues 71–81 (DDNVGAAANDA) are compositionally biased toward low complexity. 7 helical membrane-spanning segments follow: residues 121–141 (HAGL…RLII), 165–185 (WPLF…FVVE), 197–217 (VVVL…VLVI), 222–242 (SAFV…LKLV), 272–292 (YPYT…TLCY), 305–325 (GWVF…GFII), and 361–381 (VWLC…AELV). An FYXDWWN motif motif is present at residues 388 to 394 (FYKDWWN). The next 3 helical transmembrane spans lie at 429–449 (GAAS…CIAV), 451–471 (CHMF…LVLI), and 484–504 (VGNM…SVLL). His-443 is a catalytic residue.

Belongs to the membrane-bound acyltransferase family. Sterol o-acyltransferase subfamily.

The protein localises to the endoplasmic reticulum membrane. The enzyme catalyses an acyl-CoA + a 1,2-diacyl-sn-glycerol = a triacyl-sn-glycerol + CoA. It participates in glycerolipid metabolism; triacylglycerol biosynthesis. Functionally, involved in triacylglycerol (TAG) synthesis. Catalyzes the acylation of the sn-3 hydroxy group of sn-1,2-diacylglycerol using acyl-CoA. This chain is Diacylglycerol O-acyltransferase 1C, found in Glycine max (Soybean).